The chain runs to 172 residues: Adenine phosphoribosyltransferase (172 aa).

The protein belongs to the purine/pyrimidine phosphoribosyltransferase family. Homodimer.

Its subcellular location is the cytoplasm. The enzyme catalyses AMP + diphosphate = 5-phospho-alpha-D-ribose 1-diphosphate + adenine. It participates in purine metabolism; AMP biosynthesis via salvage pathway; AMP from adenine: step 1/1. Its function is as follows. Catalyzes a salvage reaction resulting in the formation of AMP, that is energically less costly than de novo synthesis. This is Adenine phosphoribosyltransferase from Clostridium kluyveri (strain NBRC 12016).